Here is a 101-residue protein sequence, read N- to C-terminus: Urease subunit beta (101 aa).

This sequence belongs to the urease beta subunit family. In terms of assembly, heterotrimer of UreA (gamma), UreB (beta) and UreC (alpha) subunits. Three heterotrimers associate to form the active enzyme.

It localises to the cytoplasm. The enzyme catalyses urea + 2 H2O + H(+) = hydrogencarbonate + 2 NH4(+). Its pathway is nitrogen metabolism; urea degradation; CO(2) and NH(3) from urea (urease route): step 1/1. The protein is Urease subunit beta of Pseudomonas aeruginosa (strain LESB58).